The chain runs to 239 residues: Ribosomal RNA small subunit methyltransferase A (239 aa).

S-adenosyl-L-methionine is bound by residues Asn23, Ile25, Gly50, Glu72, Asp97, and Asn116.

The protein belongs to the class I-like SAM-binding methyltransferase superfamily. rRNA adenine N(6)-methyltransferase family. RsmA subfamily.

The protein resides in the cytoplasm. The enzyme catalyses adenosine(1518)/adenosine(1519) in 16S rRNA + 4 S-adenosyl-L-methionine = N(6)-dimethyladenosine(1518)/N(6)-dimethyladenosine(1519) in 16S rRNA + 4 S-adenosyl-L-homocysteine + 4 H(+). Functionally, specifically dimethylates two adjacent adenosines (A1518 and A1519) in the loop of a conserved hairpin near the 3'-end of 16S rRNA in the 30S particle. May play a critical role in biogenesis of 30S subunits. This Rickettsia felis (strain ATCC VR-1525 / URRWXCal2) (Rickettsia azadi) protein is Ribosomal RNA small subunit methyltransferase A.